The sequence spans 208 residues: Large ribosomal subunit protein uL3 (208 aa).

Glutamine 149 bears the N5-methylglutamine mark.

Belongs to the universal ribosomal protein uL3 family. Part of the 50S ribosomal subunit. Forms a cluster with proteins L14 and L19. Methylated by PrmB.

Its function is as follows. One of the primary rRNA binding proteins, it binds directly near the 3'-end of the 23S rRNA, where it nucleates assembly of the 50S subunit. The protein is Large ribosomal subunit protein uL3 of Haemophilus influenzae (strain 86-028NP).